The sequence spans 226 residues: Peroxiredoxin-like 2C (226 aa).

Belongs to the peroxiredoxin-like PRXL2 family. PRXL2C subfamily. Expressed in gastric tissues.

May positively regulate ERK1/2 signaling and AKT1 activation leading to HIF1A up-regulation with an increased expression of glycolysis genes and enhanced glycolysis. This Homo sapiens (Human) protein is Peroxiredoxin-like 2C.